A 261-amino-acid polypeptide reads, in one-letter code: tRNA pseudouridine synthase A (261 aa).

Residue Asp-51 is the Nucleophile of the active site. Tyr-109 serves as a coordination point for substrate.

The protein belongs to the tRNA pseudouridine synthase TruA family. In terms of assembly, homodimer.

It catalyses the reaction uridine(38/39/40) in tRNA = pseudouridine(38/39/40) in tRNA. In terms of biological role, formation of pseudouridine at positions 38, 39 and 40 in the anticodon stem and loop of transfer RNAs. The polypeptide is tRNA pseudouridine synthase A (Psychromonas ingrahamii (strain DSM 17664 / CCUG 51855 / 37)).